Reading from the N-terminus, the 483-residue chain is NADH-quinone oxidoreductase subunit N (483 aa).

14 consecutive transmembrane segments (helical) span residues 8 to 28, 45 to 65, 78 to 98, 106 to 126, 131 to 151, 166 to 186, 206 to 226, 241 to 261, 275 to 295, 303 to 323, 330 to 350, 373 to 393, 399 to 419, and 452 to 472; these read INLA…GLLL, IAAG…GATQ, FAAF…VVSW, LGNG…MFMI, FLVL…LAAY, FVLG…IYGV, MLGI…KIAA, PTSV…AALF, WGPI…LAGL, LLAY…AVGN, VLVY…LILV, LALL…LAGF, IFMA…VLFS, and AIVG…GSLM.

It belongs to the complex I subunit 2 family. In terms of assembly, NDH-1 is composed of 14 different subunits. Subunits NuoA, H, J, K, L, M, N constitute the membrane sector of the complex.

It localises to the cell inner membrane. It carries out the reaction a quinone + NADH + 5 H(+)(in) = a quinol + NAD(+) + 4 H(+)(out). Functionally, NDH-1 shuttles electrons from NADH, via FMN and iron-sulfur (Fe-S) centers, to quinones in the respiratory chain. The immediate electron acceptor for the enzyme in this species is believed to be ubiquinone. Couples the redox reaction to proton translocation (for every two electrons transferred, four hydrogen ions are translocated across the cytoplasmic membrane), and thus conserves the redox energy in a proton gradient. The protein is NADH-quinone oxidoreductase subunit N of Magnetococcus marinus (strain ATCC BAA-1437 / JCM 17883 / MC-1).